Here is a 188-residue protein sequence, read N- to C-terminus: Peptidyl-tRNA hydrolase (188 aa).

TRNA is bound at residue Tyr-16. His-21 serves as the catalytic Proton acceptor. TRNA contacts are provided by Phe-66, Asn-68, and Asn-114.

Belongs to the PTH family. Monomer.

It localises to the cytoplasm. It carries out the reaction an N-acyl-L-alpha-aminoacyl-tRNA + H2O = an N-acyl-L-amino acid + a tRNA + H(+). Functionally, hydrolyzes ribosome-free peptidyl-tRNAs (with 1 or more amino acids incorporated), which drop off the ribosome during protein synthesis, or as a result of ribosome stalling. Catalyzes the release of premature peptidyl moieties from peptidyl-tRNA molecules trapped in stalled 50S ribosomal subunits, and thus maintains levels of free tRNAs and 50S ribosomes. In Geobacter sp. (strain M21), this protein is Peptidyl-tRNA hydrolase.